We begin with the raw amino-acid sequence, 1647 residues long: Nucleoporin nup186 (1647 aa).

This sequence belongs to the NUP186/NUP192/NUP205 family.

The protein resides in the cytoplasm. The protein localises to the nucleus. Functionally, functions as a component of the nuclear pore complex (NPC). NPC components, collectively referred to as nucleoporins (NUPs), can play the role of both NPC structural components and of docking or interaction partners for transiently associated nuclear transport factors. Active directional transport is assured by both, a Phe-Gly (FG) repeat affinity gradient for these transport factors across the NPC and a transport cofactor concentration gradient across the nuclear envelope. In Schizosaccharomyces pombe (strain 972 / ATCC 24843) (Fission yeast), this protein is Nucleoporin nup186 (nup186).